The chain runs to 587 residues: Lipoprotein LpqB (587 aa).

The first 19 residues, 1-19 (MERLMRLTILLFLGAVLAG), serve as a signal peptide directing secretion. C20 carries N-palmitoyl cysteine lipidation. C20 carries the S-diacylglycerol cysteine lipid modification.

The protein belongs to the LpqB lipoprotein family. Interacts with MtrB, probably extracytoplasmically.

It localises to the cell membrane. The protein localises to the secreted. The protein resides in the cell wall. Its function is as follows. May modulate activity of the MtrAB system in controlling homeostasis of the cell wall and cell division. In Mycobacterium tuberculosis (strain CDC 1551 / Oshkosh), this protein is Lipoprotein LpqB.